Reading from the N-terminus, the 196-residue chain is ATP-dependent Clp protease proteolytic subunit (196 aa).

Ser101 acts as the Nucleophile in catalysis. His126 is a catalytic residue.

This sequence belongs to the peptidase S14 family. In terms of assembly, component of the chloroplastic Clp protease core complex.

The protein resides in the plastid. It localises to the chloroplast stroma. The enzyme catalyses Hydrolysis of proteins to small peptides in the presence of ATP and magnesium. alpha-casein is the usual test substrate. In the absence of ATP, only oligopeptides shorter than five residues are hydrolyzed (such as succinyl-Leu-Tyr-|-NHMec, and Leu-Tyr-Leu-|-Tyr-Trp, in which cleavage of the -Tyr-|-Leu- and -Tyr-|-Trp bonds also occurs).. Its function is as follows. Cleaves peptides in various proteins in a process that requires ATP hydrolysis. Has a chymotrypsin-like activity. Plays a major role in the degradation of misfolded proteins. The sequence is that of ATP-dependent Clp protease proteolytic subunit from Atropa belladonna (Belladonna).